The chain runs to 129 residues: Methylmalonyl-CoA decarboxylase subunit gamma (129 aa).

2 stretches are compositionally biased toward low complexity: residues Ala-24–Pro-39 and Pro-49–Ala-58. A disordered region spans residues Ala-24–Ala-58. One can recognise a Biotinyl-binding domain in the interval Ala-51–Gly-129. Lys-95 bears the N6-biotinyllysine mark.

In terms of assembly, the methylmalonyl-CoA decarboxylase is composed of five subunits: the carboxyltransferase alpha subunit (MmdA), the tunnel beta subunit (MmdB), the biotin-containing gamma subunit (MmdC), and the delta (MmdD) and epsilon (MmdE) subunits. It depends on biotin as a cofactor.

It is found in the cell membrane. It carries out the reaction (S)-methylmalonyl-CoA + Na(+)(in) + H(+)(out) = propanoyl-CoA + Na(+)(out) + CO2. Its activity is regulated as follows. Completely inhibited by avidin. Its function is as follows. Biotin-containing subunit of the sodium ion pump methylmalonyl-CoA decarboxylase, which converts the chemical energy of a decarboxylation reaction into an electrochemical gradient of Na(+) ions across the cytoplasmic membrane, thereby creating a sodium ion motive force that is used for ATP synthesis. Can also convert malonyl-CoA into acetyl-CoA. In Veillonella parvula (Staphylococcus parvulus), this protein is Methylmalonyl-CoA decarboxylase subunit gamma.